The sequence spans 131 residues: MSWQAYVDDHLLCDIEGQHLSAAAIVGHDGSVWAQSENFPELKPEEVAGMIKDFDEPGTLAPTGLFVGGTKYMVIQGEPGVVIRGKKGTGGITIKKTGMSLIIGIYDEPMTPGQCNMVVERLGDYLIEQGF.

An intrachain disulfide couples C13 to C115. Positions 81–97 (VVIRGKKGTGGITIKKT) match the Involved in PIP2 interaction motif. The residue at position 111 (T111) is a Phosphothreonine.

This sequence belongs to the profilin family. In terms of assembly, multimer. Occurs in many kinds of cells as a complex with monomeric actin in a 1:1 ratio. In terms of processing, phosphorylated by MAP kinases. In terms of tissue distribution, expressed in vegetative tissues. Present in shoots, roots and coleoptiles. Also detected in endosperm and pollen.

The protein resides in the cytoplasm. It localises to the cytoskeleton. Actin binding is enhanced by calcium Ca(2+). Binds to actin and affects the structure of the cytoskeleton. At high concentrations, profilin prevents the polymerization of actin, whereas it enhances it at low concentrations. By binding to PIP2, it inhibits the formation of IP3 and DG. Has a high affinity for poly-proline. In Zea mays (Maize), this protein is Profilin-5.